The primary structure comprises 156 residues: E3 ubiquitin-protein ligase LAP (156 aa).

Residues 1-55 (MSDICWICNDVCDERNNFCGCNEEYKVVHIKCMQLWINYSKKKECNLCKTKYNIK) form an RING-CH-type zinc finger. Over 1 to 73 (MSDICWICND…WNWCFNDKKT (73 aa)) the chain is Cytoplasmic. 8 residues coordinate Zn(2+): Cys-5, Cys-8, Cys-19, Cys-21, His-29, Cys-32, Cys-45, and Cys-48. A helical transmembrane segment spans residues 74–94 (TLFKIFFILFALVFIFLTITL). The Lumenal segment spans residues 95–111 (SNDMANLVTGINDLICS). Residues 112–132 (IIFLIVYTVVMLTSICFSVFV) form a helical membrane-spanning segment. Residues 133-156 (VAIVVDFLLEAKEKNSFLTIREIV) are Cytoplasmic-facing.

This sequence belongs to the poxviridae LAP protein family.

Its subcellular location is the host membrane. It localises to the host Golgi apparatus. The protein resides in the host trans-Golgi network membrane. The protein localises to the host early endosome membrane. It carries out the reaction S-ubiquitinyl-[E2 ubiquitin-conjugating enzyme]-L-cysteine + [acceptor protein]-L-lysine = [E2 ubiquitin-conjugating enzyme]-L-cysteine + N(6)-ubiquitinyl-[acceptor protein]-L-lysine.. Functionally, E3 ubiquitin-protein ligase which promotes ubiquitination and subsequent degradation of host MHC-I and CD4 molecules, presumably to prevent lysis of infected cells by cytotoxic T-lymphocytes and NK cell. Binds target molecules through transmembrane interaction. The result of this ubiquitination is the enhancement of the endocytosis of the target chain and the delivery to the lysosome, where it is proteolytically destroyed. The polypeptide is E3 ubiquitin-protein ligase LAP (Yaba-like disease virus (YLDV)).